The sequence spans 174 residues: uncharacterized protein (174 aa).

Composition is skewed to basic and acidic residues over residues 1-31 (MDKH…GKEG) and 52-67 (EPPR…ERRS). Positions 1 to 69 (MDKHGVKTPL…GEGRERRSVS (69 aa)) are disordered.

This is an uncharacterized protein from Homo sapiens (Human).